Reading from the N-terminus, the 34-residue chain is Thermomycolin (34 aa).

Catalysis depends on serine 33, which acts as the Charge relay system.

Belongs to the peptidase S8 family.

It is found in the secreted. It catalyses the reaction Rather non-specific hydrolysis of proteins. Preferential cleavage: -Ala-|-Xaa-, -Tyr-|-Xaa-, -Phe-|-Xaa- in small molecular substrates.. Its function is as follows. This is an extracellular proteinase with a general specificity for apolar residues. This chain is Thermomycolin, found in Malbranchea cinnamomea (Thermophilic fungus).